A 78-amino-acid chain; its full sequence is Large ribosomal subunit protein bL28 (78 aa).

The segment at 1–29 is disordered; it reads MSAHCQVTGRQPSFGKSVSHSHRRTSRRW.

The protein belongs to the bacterial ribosomal protein bL28 family.

The polypeptide is Large ribosomal subunit protein bL28 (Corynebacterium efficiens (strain DSM 44549 / YS-314 / AJ 12310 / JCM 11189 / NBRC 100395)).